A 257-amino-acid chain; its full sequence is Type III pantothenate kinase (257 aa).

Position 5 to 12 (5 to 12 (DIGNTNIK)) interacts with ATP. 107-110 (GSDR) is a binding site for substrate. Residue Asp-109 is the Proton acceptor of the active site. Position 133 (Thr-133) interacts with ATP.

This sequence belongs to the type III pantothenate kinase family. In terms of assembly, homodimer. NH4(+) serves as cofactor. It depends on K(+) as a cofactor.

It localises to the cytoplasm. The enzyme catalyses (R)-pantothenate + ATP = (R)-4'-phosphopantothenate + ADP + H(+). It participates in cofactor biosynthesis; coenzyme A biosynthesis; CoA from (R)-pantothenate: step 1/5. Functionally, catalyzes the phosphorylation of pantothenate (Pan), the first step in CoA biosynthesis. The protein is Type III pantothenate kinase of Ehrlichia ruminantium (strain Gardel).